A 703-amino-acid polypeptide reads, in one-letter code: Zinc finger protein 750 (703 aa).

The CCHC-type zinc-finger motif lies at 25–51 (YKCFQCPFTCNEKSHLFNHMKYGLCKN). Zn(2+) contacts are provided by cysteine 27, cysteine 30, histidine 43, and cysteine 49. Disordered regions lie at residues 60–96 (DRVPKCSKPNSSDPKQTNQPDPVVKPTSSKPVPSGLS), 121–147 (GPHRCLGQKPTPHKEAAPPSPAPEAAV), 362–617 (PSKL…EQKQ), and 633–703 (NVEP…TRVS). The span at 67-78 (KPNSSDPKQTNQ) shows a compositional bias: polar residues. Residues 79–93 (PDPVVKPTSSKPVPS) are compositionally biased toward low complexity. Residues 375–399 (TELEKQSPTPEAKEPSKDGQRDTEG) are compositionally biased toward basic and acidic residues. Positions 418 to 428 (SPTNFTQTSQP) are enriched in polar residues. Positions 583–592 (SSGDGPDPSS) are enriched in low complexity. Basic and acidic residues predominate over residues 605–616 (QDIRAADSDEQK).

The protein resides in the nucleus. Its function is as follows. Transcription factor involved in epidermis differentiation. Required for terminal epidermal differentiation: acts downstream of p63/TP63 and activates expression of late epidermal differentiation genes. Specifically binds to the promoter of KLF4 and promotes its expression. The protein is Zinc finger protein 750 (ZNF750) of Bos taurus (Bovine).